The primary structure comprises 754 residues: 5-methyltetrahydropteroyltriglutamate--homocysteine methyltransferase (754 aa).

5-methyltetrahydropteroyltri-L-glutamate-binding positions include 15 to 18 and Lys114; that span reads RELK. L-homocysteine contacts are provided by residues 430 to 432 and Glu483; that span reads IGS. L-methionine-binding positions include 430 to 432 and Glu483; that span reads IGS. 5-methyltetrahydropteroyltri-L-glutamate-binding positions include 514–515 and Trp560; that span reads RC. Residue Asp598 participates in L-homocysteine binding. An L-methionine-binding site is contributed by Asp598. Glu604 lines the 5-methyltetrahydropteroyltri-L-glutamate pocket. Zn(2+)-binding residues include His641, Cys643, and Glu665. His694 functions as the Proton donor in the catalytic mechanism. Zn(2+) is bound at residue Cys726.

It belongs to the vitamin-B12 independent methionine synthase family. It depends on Zn(2+) as a cofactor.

It catalyses the reaction 5-methyltetrahydropteroyltri-L-glutamate + L-homocysteine = tetrahydropteroyltri-L-glutamate + L-methionine. The protein operates within amino-acid biosynthesis; L-methionine biosynthesis via de novo pathway; L-methionine from L-homocysteine (MetE route): step 1/1. Functionally, catalyzes the transfer of a methyl group from 5-methyltetrahydrofolate to homocysteine resulting in methionine formation. This is 5-methyltetrahydropteroyltriglutamate--homocysteine methyltransferase from Campylobacter jejuni subsp. jejuni serotype O:2 (strain ATCC 700819 / NCTC 11168).